A 150-amino-acid chain; its full sequence is FCS-Like Zinc finger 15 (150 aa).

The span at 12–28 (NNNNNNNNNNNNNNNKN) shows a compositional bias: low complexity. The tract at residues 12-31 (NNNNNNNNNNNNNNNKNPLS) is disordered. The FLZ-type zinc finger occupies 67 to 111 (GFLEHCFLCRRKLLPAKDIYMYKGDRAFCSVECRSKQMIMDEEES). The segment at 129–150 (SPATAPSRYRRDPRNQAGGFAY) is disordered.

This sequence belongs to the FLZ family. In terms of assembly, interacts with KIN10 and KIN11 via its FLZ-type zinc finger domain. Interacts with KINB1 and KINB3 via its N-terminal part. Forms homodimer and heterodimer with FLZ1, FLZ2 and FLZ7 in vitro.

Its subcellular location is the cytoplasm. The protein localises to the P-body. Functionally, may act as an adapter to facilitate the interaction of SnRK1 complex with effector proteins, conferring tissue- and stimulus-type specific differences in the SnRK1 regulation pathway. The chain is FCS-Like Zinc finger 15 from Arabidopsis thaliana (Mouse-ear cress).